The sequence spans 448 residues: tRNA(Ile)-lysidine synthase (448 aa).

25 to 30 (SGGSDS) contributes to the ATP binding site.

The protein belongs to the tRNA(Ile)-lysidine synthase family.

The protein resides in the cytoplasm. The enzyme catalyses cytidine(34) in tRNA(Ile2) + L-lysine + ATP = lysidine(34) in tRNA(Ile2) + AMP + diphosphate + H(+). Its function is as follows. Ligates lysine onto the cytidine present at position 34 of the AUA codon-specific tRNA(Ile) that contains the anticodon CAU, in an ATP-dependent manner. Cytidine is converted to lysidine, thus changing the amino acid specificity of the tRNA from methionine to isoleucine. The chain is tRNA(Ile)-lysidine synthase from Brucella canis (strain ATCC 23365 / NCTC 10854 / RM-666).